Here is a 379-residue protein sequence, read N- to C-terminus: Demethylspheroidene O-methyltransferase (379 aa).

S-adenosyl-L-methionine-binding residues include aspartate 235 and arginine 279.

The protein belongs to the class I-like SAM-binding methyltransferase superfamily. Cation-independent O-methyltransferase family.

The enzyme catalyses demethylspheroidene + S-adenosyl-L-methionine = spheroidene + S-adenosyl-L-homocysteine + H(+). Its pathway is carotenoid biosynthesis; spheroidene biosynthesis. Functionally, methyltransferase that mediates the O-methylation of 1-hydroxy carotenoids. Converts hydroxyneurosporene to methoxyneurosporene or demethylspheroidene to spheroidene. Also able to produce spirilloxanthin. The polypeptide is Demethylspheroidene O-methyltransferase (crtF) (Cereibacter sphaeroides (strain ATCC 17023 / DSM 158 / JCM 6121 / CCUG 31486 / LMG 2827 / NBRC 12203 / NCIMB 8253 / ATH 2.4.1.) (Rhodobacter sphaeroides)).